The primary structure comprises 112 residues: Photosystem II reaction center Psb28 protein (112 aa).

The protein belongs to the Psb28 family. In terms of assembly, part of the photosystem II complex.

The protein resides in the cellular thylakoid membrane. This chain is Photosystem II reaction center Psb28 protein, found in Synechococcus elongatus (strain ATCC 33912 / PCC 7942 / FACHB-805) (Anacystis nidulans R2).